The following is a 442-amino-acid chain: UDP-N-acetylmuramate--L-alanine ligase (442 aa).

Position 109 to 115 (109 to 115 (GAHGKTS)) interacts with ATP.

Belongs to the MurCDEF family.

Its subcellular location is the cytoplasm. It carries out the reaction UDP-N-acetyl-alpha-D-muramate + L-alanine + ATP = UDP-N-acetyl-alpha-D-muramoyl-L-alanine + ADP + phosphate + H(+). The protein operates within cell wall biogenesis; peptidoglycan biosynthesis. Cell wall formation. The protein is UDP-N-acetylmuramate--L-alanine ligase of Streptococcus pyogenes serotype M49 (strain NZ131).